A 102-amino-acid chain; its full sequence is uncharacterized protein (102 aa).

Disordered stretches follow at residues 1 to 21 (MKRM…GAGE) and 33 to 71 (GSGT…SACT). At 1–79 (MKRMIRSHGR…CTRTDHQKAD (79 aa)) the chain is on the extracellular side. The span at 56 to 71 (SSGTRRGSANETSACT) shows a compositional bias: polar residues. Asn-65 carries an N-linked (GlcNAc...) asparagine; by host glycan. Residues 80–97 (IGLWFMFLVFGLCSWLAM) traverse the membrane as a helical segment. Over 98–102 (RYRAQ) the chain is Cytoplasmic.

Belongs to the HHV-5 UL15A protein family.

Its subcellular location is the host membrane. This is an uncharacterized protein from Human cytomegalovirus (strain Merlin) (HHV-5).